The sequence spans 143 residues: Peptide methionine sulfoxide reductase MsrB (143 aa).

The region spanning 16–139 (DAELRRRLTP…NSAALNFEAK (124 aa)) is the MsrB domain. Zn(2+) is bound by residues C55, C58, C104, and C107. The Nucleophile role is filled by C128.

This sequence belongs to the MsrB Met sulfoxide reductase family. The cofactor is Zn(2+).

It carries out the reaction L-methionyl-[protein] + [thioredoxin]-disulfide + H2O = L-methionyl-(R)-S-oxide-[protein] + [thioredoxin]-dithiol. The chain is Peptide methionine sulfoxide reductase MsrB from Burkholderia pseudomallei (strain 1710b).